A 90-amino-acid chain; its full sequence is UPF0512 protein L (90 aa).

It belongs to the UPF0512 family.

This Dictyostelium discoideum (Social amoeba) protein is UPF0512 protein L.